Consider the following 259-residue polypeptide: MAAASSPREENVYLAKLAEQAERYEEMVEFMEKVVAAADGGEELTIEERNLLSVAYKNVIGARRASWRIISSIEQKEESRGNEGHVSTIRDYRSKIESELSSICDGILKVLDSKLIGSASGGDSKVFYLKMKGDYYRYLAEFKTGDERKLAAENTLSAYKAAQDIANAELAPTHPIRLGLALNFSVFYYEILNSPDRACNLAKQAFDEAIAELDTLGEDSYKDSTLIMQLLRDNLTLWTSDMQDDTAEEVKEAPKPDDQ.

The protein belongs to the 14-3-3 family.

This is 14-3-3-like protein from Helianthus annuus (Common sunflower).